Reading from the N-terminus, the 407-residue chain is uncharacterized protein (407 aa).

Residues 1-250 (MLDPLDILTN…LERDVLKQRL (250 aa)) enclose the EAL domain.

This is an uncharacterized protein from Bacillus subtilis (strain 168).